The following is a 557-amino-acid chain: Polypyrimidine tract-binding protein 1 (557 aa).

M1 carries the N-acetylmethionine modification. S16 bears the Phosphoserine mark. 3 RRM domains span residues 59-143 (RVIH…SSPN), 184-260 (LRII…FSKL), and 363-437 (SVLL…LSKH). K65 participates in a covalent cross-link: Glycyl lysine isopeptide (Lys-Gly) (interchain with G-Cter in SUMO2). Residue Y127 is modified to Phosphotyrosine. T138 carries the post-translational modification Phosphothreonine. S141 is modified (phosphoserine). Residue K218 forms a Glycyl lysine isopeptide (Lys-Gly) (interchain with G-Cter in SUMO2) linkage. Position 459 is a phosphoserine (S459). Positions 480 to 555 (ATLHLSNIPP…HHLRVSFSKS (76 aa)) constitute an RRM 4 domain.

In terms of assembly, monomer. Part of a ternary complex containing KHSRP, PTBP1, PTBP2 and HNRPH1. Interacts with RAVER1 and SFPQ.

It localises to the nucleus. Its function is as follows. Plays a role in pre-mRNA splicing and in the regulation of alternative splicing events. Activates exon skipping of its own pre-mRNA during muscle cell differentiation. Binds to the polypyrimidine tract of introns. May promote RNA looping when bound to two separate polypyrimidine tracts in the same pre-mRNA. May promote the binding of U2 snRNP to pre-mRNA. Cooperates with RAVER1 to modulate switching between mutually exclusive exons during maturation of the TPM1 pre-mRNA. Represses the splicing of MAPT/Tau exon 10. Binds to polypyrimidine-rich controlling element (PCE) of CFTR and promotes exon skipping of CFTR exon 9, thereby antagonizing TIA1 and its role in exon inclusion of CFTR exon 9. Plays a role in the splicing of pyruvate kinase PKM by binding repressively to a polypyrimidine tract flanking PKM exon 9, inhibiting exon 9 inclusion and resulting in exon 10 inclusion and production of the PKM M2 isoform. The sequence is that of Polypyrimidine tract-binding protein 1 (PTBP1) from Sus scrofa (Pig).